Here is a 767-residue protein sequence, read N- to C-terminus: Dipeptidyl peptidase 4 (767 aa).

The Cytoplasmic segment spans residues methionine 1–lysine 6. Residues valine 7–leucine 28 form a helical; Signal-anchor for type II membrane protein membrane-spanning segment. The Extracellular portion of the chain corresponds to asparagine 29 to arginine 767. 6 N-linked (GlcNAc...) asparagine glycosylation sites follow: asparagine 83, asparagine 90, asparagine 148, asparagine 217, asparagine 227, and asparagine 319. 4 cysteine pairs are disulfide-bonded: cysteine 326-cysteine 337, cysteine 383-cysteine 395, cysteine 445-cysteine 448, and cysteine 455-cysteine 473. Asparagine 521 is a glycosylation site (N-linked (GlcNAc...) asparagine). The Charge relay system role is filled by serine 631. Cysteine 650 and cysteine 763 are oxidised to a cystine. Asparagine 686 carries an N-linked (GlcNAc...) asparagine glycan. Catalysis depends on charge relay system residues aspartate 709 and histidine 741.

The protein belongs to the peptidase S9B family. DPPIV subfamily. Monomer. Homodimer. Heterodimer with Seprase (FAP). Requires homodimerization for optimal dipeptidyl peptidase activity and T-cell costimulation. Found in a membrane raft complex, at least composed of BCL10, CARD11, DPP4 and IKBKB. Associates with collagen. Interacts with PTPRC; the interaction is enhanced in an interleukin-12-dependent manner in activated lymphocytes. Interacts (via extracellular domain) with ADA; does not inhibit its dipeptidyl peptidase activity. Interacts with CAV1 (via the N-terminus); the interaction is direct. Interacts (via cytoplasmic tail) with CARD11 (via PDZ domain); its homodimerization is necessary for interaction with CARD11. Interacts with IGF2R; the interaction is direct. Interacts with GPC3. Post-translationally, the soluble form (Dipeptidyl peptidase 4 soluble form also named SDPP) derives from the membrane form (Dipeptidyl peptidase 4 membrane form also named MDPP) by proteolytic processing. In terms of processing, N- and O-Glycosylated. Phosphorylated. Mannose 6-phosphate residues in the carbohydrate moiety are necessary for interaction with IGF2R in activated T-cells. Mannose 6-phosphorylation is induced during T-cell activation. As to expression, expressed in bile ducts and other epithelial brush borders (small intestine, kidney, colon, pancreatic duct); acinar structures in salivary glands; endothelial structures and T cell areas in thymus, spleen and lymph node.

The protein localises to the secreted. It is found in the cell membrane. Its subcellular location is the apical cell membrane. It localises to the cell projection. The protein resides in the invadopodium membrane. The protein localises to the lamellipodium membrane. It is found in the cell junction. Its subcellular location is the membrane raft. It carries out the reaction Release of an N-terminal dipeptide, Xaa-Yaa-|-Zaa-, from a polypeptide, preferentially when Yaa is Pro, provided Zaa is neither Pro nor hydroxyproline.. With respect to regulation, inhibited by GPC3 and diprotin A. Functionally, cell surface glycoprotein receptor involved in the costimulatory signal essential for T-cell receptor (TCR)-mediated T-cell activation. Acts as a positive regulator of T-cell coactivation, by binding at least ADA, CAV1, IGF2R, and PTPRC. Its binding to CAV1 and CARD11 induces T-cell proliferation and NF-kappa-B activation in a T-cell receptor/CD3-dependent manner. Its interaction with ADA also regulates lymphocyte-epithelial cell adhesion. In association with FAP is involved in the pericellular proteolysis of the extracellular matrix (ECM), the migration and invasion of endothelial cells into the ECM. May be involved in the promotion of lymphatic endothelial cells adhesion, migration and tube formation. When overexpressed, enhanced cell proliferation, a process inhibited by GPC3. Also acts as a serine exopeptidase with a dipeptidyl peptidase activity that regulates various physiological processes by cleaving peptides in the circulation, including many chemokines, mitogenic growth factors, neuropeptides and peptide hormones. Removes N-terminal dipeptides sequentially from polypeptides having unsubstituted N-termini provided that the penultimate residue is proline. This chain is Dipeptidyl peptidase 4 (Dpp4), found in Rattus norvegicus (Rat).